Consider the following 130-residue polypeptide: Small ribosomal subunit protein uS8 (130 aa).

This sequence belongs to the universal ribosomal protein uS8 family. In terms of assembly, part of the 30S ribosomal subunit. Contacts proteins S5 and S12.

One of the primary rRNA binding proteins, it binds directly to 16S rRNA central domain where it helps coordinate assembly of the platform of the 30S subunit. This is Small ribosomal subunit protein uS8 from Cytophaga hutchinsonii (strain ATCC 33406 / DSM 1761 / CIP 103989 / NBRC 15051 / NCIMB 9469 / D465).